The following is a 93-amino-acid chain: Putative regulatory protein Fnod_1678 (93 aa).

The protein belongs to the RemA family.

This Fervidobacterium nodosum (strain ATCC 35602 / DSM 5306 / Rt17-B1) protein is Putative regulatory protein Fnod_1678.